We begin with the raw amino-acid sequence, 216 residues long: Small ribosomal subunit protein uS3 (216 aa).

The region spanning 38 to 106 (IRGYLKKKLY…EIIINILEVR (69 aa)) is the KH type-2 domain.

The protein belongs to the universal ribosomal protein uS3 family. As to quaternary structure, part of the 30S ribosomal subunit. Forms a tight complex with proteins S10 and S14.

Its function is as follows. Binds the lower part of the 30S subunit head. Binds mRNA in the 70S ribosome, positioning it for translation. In Syntrophus aciditrophicus (strain SB), this protein is Small ribosomal subunit protein uS3.